Reading from the N-terminus, the 548-residue chain is DNA ligase (548 aa).

Position 252 (E252) interacts with ATP. K254 serves as the catalytic N6-AMP-lysine intermediate. R259, R274, E303, F343, R414, and K420 together coordinate ATP.

Belongs to the ATP-dependent DNA ligase family. Mg(2+) is required as a cofactor.

It catalyses the reaction ATP + (deoxyribonucleotide)n-3'-hydroxyl + 5'-phospho-(deoxyribonucleotide)m = (deoxyribonucleotide)n+m + AMP + diphosphate.. In terms of biological role, DNA ligase that seals nicks in double-stranded DNA during DNA replication, DNA recombination and DNA repair. The chain is DNA ligase from Natronomonas pharaonis (strain ATCC 35678 / DSM 2160 / CIP 103997 / JCM 8858 / NBRC 14720 / NCIMB 2260 / Gabara) (Halobacterium pharaonis).